We begin with the raw amino-acid sequence, 248 residues long: Myelin protein P0 (248 aa).

The first 28 residues, 1 to 28 (MAPGAPSSSPSPILAALLFSSLVLSPVQ), serve as a signal peptide directing secretion. Over 29 to 155 (AIVVYTDKEV…VFEKVPTRYG (127 aa)) the chain is Extracellular. Residues 30–143 (IVVYTDKEVH…DIVGKTSQVT (114 aa)) form the Ig-like V-type domain. C50 and C127 form a disulfide bridge. N-linked (GlcNAc...) (complex) asparagine glycosylation is present at N122. A helical membrane pass occupies residues 156–176 (VVLGAVIGGVLGVVLLALLLF). Residues 177–248 (YLIRYCWLRR…GLGESRKDKK (72 aa)) lie on the Cytoplasmic side of the membrane. S210 is subject to Phosphoserine; by PKC. The tract at residues 224 to 248 (DHSRSTKAASEKKTKGLGESRKDKK) is disordered. A phosphoserine mark is found at S226 and S228. Phosphoserine; by PKC occurs at positions 233 and 243.

Belongs to the myelin P0 protein family. As to quaternary structure, homodimer and homotetramer. N-glycosylated; contains sulfate-substituted glycan. In terms of tissue distribution, found only in peripheral nervous system Schwann cells.

The protein resides in the cell membrane. Is an adhesion molecule necessary for normal myelination in the peripheral nervous system. It mediates adhesion between adjacent myelin wraps and ultimately drives myelin compaction. This Bos taurus (Bovine) protein is Myelin protein P0 (MPZ).